Reading from the N-terminus, the 406-residue chain is Tryptophan synthase beta chain (406 aa).

K97 is modified (N6-(pyridoxal phosphate)lysine).

This sequence belongs to the TrpB family. Tetramer of two alpha and two beta chains. Pyridoxal 5'-phosphate serves as cofactor.

It catalyses the reaction (1S,2R)-1-C-(indol-3-yl)glycerol 3-phosphate + L-serine = D-glyceraldehyde 3-phosphate + L-tryptophan + H2O. The protein operates within amino-acid biosynthesis; L-tryptophan biosynthesis; L-tryptophan from chorismate: step 5/5. Functionally, the beta subunit is responsible for the synthesis of L-tryptophan from indole and L-serine. This is Tryptophan synthase beta chain from Lacticaseibacillus paracasei (strain ATCC 334 / BCRC 17002 / CCUG 31169 / CIP 107868 / KCTC 3260 / NRRL B-441) (Lactobacillus paracasei).